The following is a 214-amino-acid chain: Adenylate kinase (214 aa).

10–15 (GAGKGT) contacts ATP. The interval 30-59 (STGDMLRAAVKAGTPLGLEAKKVMDAGQLV) is NMP. AMP-binding positions include Thr31, Arg36, 57 to 59 (QLV), 85 to 88 (GFPR), and Gln92. An LID region spans residues 122–159 (GRRVHPGSGRVYHIVFNQPKVEGKDDVTGEDLAIRPDD). ATP is bound by residues Arg123 and 132-133 (VY). AMP contacts are provided by Arg156 and Arg167. Position 200 (Gln200) interacts with ATP.

Belongs to the adenylate kinase family. Monomer.

The protein localises to the cytoplasm. The catalysed reaction is AMP + ATP = 2 ADP. The protein operates within purine metabolism; AMP biosynthesis via salvage pathway; AMP from ADP: step 1/1. Functionally, catalyzes the reversible transfer of the terminal phosphate group between ATP and AMP. Plays an important role in cellular energy homeostasis and in adenine nucleotide metabolism. The protein is Adenylate kinase of Shewanella piezotolerans (strain WP3 / JCM 13877).